A 270-amino-acid polypeptide reads, in one-letter code: Protein US2 homolog (270 aa).

It belongs to the herpesviridae US2 family.

The protein is Protein US2 homolog (MDV091) of Gallid herpesvirus 2 (strain Chicken/Md5/ATCC VR-987) (GaHV-2).